The sequence spans 532 residues: Cytochrome P450 99A2 (532 aa).

A helical membrane pass occupies residues 30–50 (SAATLTLVSLLTLPILLALLT). A heme-binding site is contributed by Cys-468. Residues 473 to 493 (FGMVLLELIVARLLYYFDWSL) traverse the membrane as a helical segment.

It belongs to the cytochrome P450 family. It depends on heme as a cofactor.

The protein localises to the membrane. In terms of biological role, involved in momilactone phytoalexins biosynthesis. Participates in the biosynthetic steps between 9-beta-pimara-7,15-diene and 3-beta-hydroxy-9-beta-pimara-7,15-dien-19,6-beta-olide. The sequence is that of Cytochrome P450 99A2 (CYP99A2) from Oryza sativa subsp. japonica (Rice).